We begin with the raw amino-acid sequence, 71 residues long: Large ribosomal subunit protein bL31 (71 aa).

Residues Cys16, Cys18, Cys37, and Cys40 each contribute to the Zn(2+) site.

The protein belongs to the bacterial ribosomal protein bL31 family. Type A subfamily. As to quaternary structure, part of the 50S ribosomal subunit. Zn(2+) is required as a cofactor.

Its function is as follows. Binds the 23S rRNA. This Actinobacillus succinogenes (strain ATCC 55618 / DSM 22257 / CCUG 43843 / 130Z) protein is Large ribosomal subunit protein bL31.